Reading from the N-terminus, the 384-residue chain is FAD-dependent urate hydroxylase (384 aa).

Residues G11, E30 to A31, S43, and V125 each bind FAD. Residues N178, R204, and Y216–F218 each bind substrate. FAD contacts are provided by residues D285 and G295–C299.

Belongs to the FAD-dependent urate hydroxylase family. Monomer. FAD is required as a cofactor.

The catalysed reaction is urate + NADH + O2 + H(+) = 5-hydroxyisourate + NAD(+) + H2O. It functions in the pathway purine metabolism; urate degradation. Its function is as follows. Catalyzes the hydroxylation of urate to 5-hydroxyisourate (HIU). This is FAD-dependent urate hydroxylase from Klebsiella pneumoniae subsp. pneumoniae (strain ATCC 700721 / MGH 78578).